Here is an 89-residue protein sequence, read N- to C-terminus: Small ribosomal subunit protein uS15 (89 aa).

The protein belongs to the universal ribosomal protein uS15 family. As to quaternary structure, part of the 30S ribosomal subunit. Forms a bridge to the 50S subunit in the 70S ribosome, contacting the 23S rRNA.

Functionally, one of the primary rRNA binding proteins, it binds directly to 16S rRNA where it helps nucleate assembly of the platform of the 30S subunit by binding and bridging several RNA helices of the 16S rRNA. Forms an intersubunit bridge (bridge B4) with the 23S rRNA of the 50S subunit in the ribosome. The sequence is that of Small ribosomal subunit protein uS15 from Roseobacter denitrificans (strain ATCC 33942 / OCh 114) (Erythrobacter sp. (strain OCh 114)).